A 162-amino-acid polypeptide reads, in one-letter code: RNA replication protein (162 aa).

It belongs to the potexvirus/carlavirus RNA replication protein family.

The catalysed reaction is RNA(n) + a ribonucleoside 5'-triphosphate = RNA(n+1) + diphosphate. The enzyme catalyses ATP + H2O = ADP + phosphate + H(+). Functionally, RNA replication. The central part of this protein possibly functions as an ATP-binding helicase. This Lilium formosanum protein is RNA replication protein.